A 516-amino-acid polypeptide reads, in one-letter code: Cytochrome P450 6d1 (516 aa).

Residue C461 coordinates heme.

The protein belongs to the cytochrome P450 family. It depends on heme as a cofactor.

Its subcellular location is the endoplasmic reticulum membrane. It is found in the microsome membrane. Functionally, metabolizes pyrethroid insecticides and other xenobiotics. The polypeptide is Cytochrome P450 6d1 (CYP6D1) (Musca domestica (House fly)).